Reading from the N-terminus, the 722-residue chain is Polyribonucleotide nucleotidyltransferase (722 aa).

Positions 505 and 511 each coordinate Mg(2+). Residues P572–V631 form the KH domain. The S1 motif domain occupies G641–K709.

Belongs to the polyribonucleotide nucleotidyltransferase family. As to quaternary structure, component of the RNA degradosome, which is a multiprotein complex involved in RNA processing and mRNA degradation. It depends on Mg(2+) as a cofactor.

Its subcellular location is the cytoplasm. The enzyme catalyses RNA(n+1) + phosphate = RNA(n) + a ribonucleoside 5'-diphosphate. In terms of biological role, involved in mRNA degradation. Catalyzes the phosphorolysis of single-stranded polyribonucleotides processively in the 3'- to 5'-direction. This chain is Polyribonucleotide nucleotidyltransferase, found in Marinobacter nauticus (strain ATCC 700491 / DSM 11845 / VT8) (Marinobacter aquaeolei).